Consider the following 480-residue polypeptide: Ribulose bisphosphate carboxylase large chain (480 aa).

A propeptide spanning residues 1-2 (MS) is cleaved from the precursor. Proline 3 is modified (N-acetylproline). Lysine 14 carries the N6,N6,N6-trimethyllysine modification. Positions 123 and 173 each coordinate substrate. Residue lysine 175 is the Proton acceptor of the active site. Lysine 177 is a substrate binding site. Residues lysine 201, aspartate 203, and glutamate 204 each coordinate Mg(2+). At lysine 201 the chain carries N6-carboxylysine. Histidine 294 (proton acceptor) is an active-site residue. Residues arginine 295, histidine 327, and serine 379 each contribute to the substrate site.

Belongs to the RuBisCO large chain family. Type I subfamily. Heterohexadecamer of 8 large chains and 8 small chains; disulfide-linked. The disulfide link is formed within the large subunit homodimers. It depends on Mg(2+) as a cofactor. Post-translationally, the disulfide bond which can form in the large chain dimeric partners within the hexadecamer appears to be associated with oxidative stress and protein turnover.

Its subcellular location is the plastid. The protein localises to the chloroplast. The catalysed reaction is 2 (2R)-3-phosphoglycerate + 2 H(+) = D-ribulose 1,5-bisphosphate + CO2 + H2O. It catalyses the reaction D-ribulose 1,5-bisphosphate + O2 = 2-phosphoglycolate + (2R)-3-phosphoglycerate + 2 H(+). Its function is as follows. RuBisCO catalyzes two reactions: the carboxylation of D-ribulose 1,5-bisphosphate, the primary event in carbon dioxide fixation, as well as the oxidative fragmentation of the pentose substrate in the photorespiration process. Both reactions occur simultaneously and in competition at the same active site. The chain is Ribulose bisphosphate carboxylase large chain from Gossypium barbadense (Sea Island cotton).